The following is a 105-amino-acid chain: Large ribosomal subunit protein uL24 (105 aa).

This sequence belongs to the universal ribosomal protein uL24 family. As to quaternary structure, part of the 50S ribosomal subunit.

One of two assembly initiator proteins, it binds directly to the 5'-end of the 23S rRNA, where it nucleates assembly of the 50S subunit. In terms of biological role, one of the proteins that surrounds the polypeptide exit tunnel on the outside of the subunit. The polypeptide is Large ribosomal subunit protein uL24 (Aeromonas hydrophila subsp. hydrophila (strain ATCC 7966 / DSM 30187 / BCRC 13018 / CCUG 14551 / JCM 1027 / KCTC 2358 / NCIMB 9240 / NCTC 8049)).